Consider the following 260-residue polypeptide: Shikimate dehydrogenase (NADP(+)) (260 aa).

Shikimate is bound by residues 14 to 16 and Thr60; that span reads SAS. Catalysis depends on Lys64, which acts as the Proton acceptor. Shikimate is bound by residues Asn85 and Asp100. Residues 121–125, 145–150, and Phe201 contribute to the NADP(+) site; these read GAGGA and NRTYER. Tyr203 is a binding site for shikimate. An NADP(+)-binding site is contributed by Gly225.

This sequence belongs to the shikimate dehydrogenase family. In terms of assembly, homodimer.

The catalysed reaction is shikimate + NADP(+) = 3-dehydroshikimate + NADPH + H(+). It participates in metabolic intermediate biosynthesis; chorismate biosynthesis; chorismate from D-erythrose 4-phosphate and phosphoenolpyruvate: step 4/7. Involved in the biosynthesis of the chorismate, which leads to the biosynthesis of aromatic amino acids. Catalyzes the reversible NADPH linked reduction of 3-dehydroshikimate (DHSA) to yield shikimate (SA). This Pyrobaculum neutrophilum (strain DSM 2338 / JCM 9278 / NBRC 100436 / V24Sta) (Thermoproteus neutrophilus) protein is Shikimate dehydrogenase (NADP(+)).